Consider the following 395-residue polypeptide: Succinyl-diaminopimelate desuccinylase (395 aa).

His-74 contacts Zn(2+). Asp-76 is a catalytic residue. Asp-107 lines the Zn(2+) pocket. The active-site Proton acceptor is the Glu-141. 3 residues coordinate Zn(2+): Glu-142, Glu-170, and His-368.

Belongs to the peptidase M20A family. DapE subfamily. As to quaternary structure, homodimer. Zn(2+) is required as a cofactor. It depends on Co(2+) as a cofactor.

The catalysed reaction is N-succinyl-(2S,6S)-2,6-diaminopimelate + H2O = (2S,6S)-2,6-diaminopimelate + succinate. The protein operates within amino-acid biosynthesis; L-lysine biosynthesis via DAP pathway; LL-2,6-diaminopimelate from (S)-tetrahydrodipicolinate (succinylase route): step 3/3. Catalyzes the hydrolysis of N-succinyl-L,L-diaminopimelic acid (SDAP), forming succinate and LL-2,6-diaminopimelate (DAP), an intermediate involved in the bacterial biosynthesis of lysine and meso-diaminopimelic acid, an essential component of bacterial cell walls. The sequence is that of Succinyl-diaminopimelate desuccinylase from Brucella melitensis biotype 1 (strain ATCC 23456 / CCUG 17765 / NCTC 10094 / 16M).